A 147-amino-acid polypeptide reads, in one-letter code: 3-dehydroquinate dehydratase (147 aa).

Tyr-25 serves as the catalytic Proton acceptor. Residues Asn-76, His-82, and Asp-89 each contribute to the substrate site. His-102 serves as the catalytic Proton donor. Substrate is bound by residues 103–104 and Arg-113; that span reads IS.

It belongs to the type-II 3-dehydroquinase family. Homododecamer.

The catalysed reaction is 3-dehydroquinate = 3-dehydroshikimate + H2O. The protein operates within metabolic intermediate biosynthesis; chorismate biosynthesis; chorismate from D-erythrose 4-phosphate and phosphoenolpyruvate: step 3/7. Catalyzes a trans-dehydration via an enolate intermediate. The polypeptide is 3-dehydroquinate dehydratase (Mycobacterium tuberculosis (strain ATCC 25177 / H37Ra)).